The chain runs to 268 residues: AN1-type zinc finger protein 1 (268 aa).

Ala-2 is modified (N-acetylalanine). 2 AN1-type zinc fingers span residues 4–52 and 58–106; these read LDIG…VVKE and EHKS…VAKP. Residues Cys-10, Cys-15, Cys-25, Cys-28, Cys-33, His-36, His-42, Cys-44, Cys-64, Cys-69, Cys-79, Cys-82, Cys-87, His-90, His-96, and Cys-98 each coordinate Zn(2+). Residues 160 to 260 form a ubiquitin-like region; sequence QTERTYFQVY…EYLNDEEQFL (101 aa).

In terms of assembly, associates with the 26S proteasome; this association occurs upon exposure to arsenite and is reduced in the presence of ATP. Interacts (via AN1-type 1 and 2 zinc fingers) with PSMD1; this interaction is increased upon arsenite treatment and occurs in an ATP-independent manner. Interacts with PSMC4. Interacts with PSMA1. Interacts (via its ubiquitin-like region) with VCP; this interaction occurs in an arsenite-dependent manner and is necessary for the recruitment of the ubiquitin-selective ATPase VCP to stress granules (SGs).

Its subcellular location is the cytoplasm. It localises to the stress granule. Plays a role in the regulation of cytoplasmic stress granules (SGs) turnover. SGs are dynamic and transient cytoplasmic ribonucleoprotein assemblies important for cellular protein homeostasis when protein production is suspended after acute exogenous stress. Associates with SGs and is involved in the efficient and specific arsenite-induced clearance process of SGs through the recruitment of the ubiquitin-selective ATPase VCP and the 26S proteasome. This process requires both complexes for efficient degradation of damaged ubiquitinated SG proteins during recovery from arsenite stress, and hence avoiding aberrant cytoplasmic SGs degradation via autophagy. The polypeptide is AN1-type zinc finger protein 1 (Mus musculus (Mouse)).